Consider the following 342-residue polypeptide: MRLAVIGGDGIGPEVVAEGLRVLRAVHPKVDTTEYDLGARRWHETGETLPDSVLEELRGHDAILLGAVGDPGVPSGVLERGLLLRLRFEFDHHVNLRPVRLYPGVRSPLAGDPAIDMIVVREGTEGPYAGAGGVLRKGTPHEVATEESLNTRYGVERVVRDAFRRADRRERRHLTLVHKNNVLTKAGDLWSRTVAEVAPEFPDVRVDYQHVDAASMFFVTDPGRFDVVVTDNMFGDILTDIGAAITGGIGLAASGNLDPSGVHPSMFEPVHGSAPDIAGRQLADPTATVASVAMLLDHLGHAEEAAKVEAAVASSLADRAAAGAAQPSTRERGEDLAARAAG.

Substrate-binding residues include arginine 87, arginine 97, arginine 121, and aspartate 212. Positions 212, 236, and 240 each coordinate Mg(2+). 272–284 (GSAPDIAGRQLAD) is a binding site for NAD(+). The segment covering 319–328 (RAAAGAAQPS) has biased composition (low complexity). Positions 319-342 (RAAAGAAQPSTRERGEDLAARAAG) are disordered. A compositionally biased stretch (basic and acidic residues) spans 329 to 342 (TRERGEDLAARAAG).

The protein belongs to the isocitrate and isopropylmalate dehydrogenases family. LeuB type 2 subfamily. As to quaternary structure, homodimer. The cofactor is Mg(2+). Mn(2+) serves as cofactor.

Its subcellular location is the cytoplasm. The catalysed reaction is (2R,3S)-3-isopropylmalate + NAD(+) = 4-methyl-2-oxopentanoate + CO2 + NADH. The protein operates within amino-acid biosynthesis; L-leucine biosynthesis; L-leucine from 3-methyl-2-oxobutanoate: step 3/4. Functionally, catalyzes the oxidation of 3-carboxy-2-hydroxy-4-methylpentanoate (3-isopropylmalate) to 3-carboxy-4-methyl-2-oxopentanoate. The product decarboxylates to 4-methyl-2 oxopentanoate. The protein is 3-isopropylmalate dehydrogenase of Frankia casuarinae (strain DSM 45818 / CECT 9043 / HFP020203 / CcI3).